Reading from the N-terminus, the 223-residue chain is MIGWLKGEKIDHWNNGNRAGFVLSCNGVGYEIQLSRRNLIALNNYNVLSIWIHQVLKEDGSNLFGFIEKSERDLFRKLITVSGVGPQLAMSLLDDNSYEQLIANVQNKEVTKLTRSSGVGKRTAERLILELQNKLSDFDLNNEFSPPTKLRPESAEDLNEELLTEIKSALRNLDYSDFEILEAVNTVTSNYLDDAASANERKLLLKSLNFEKLFKQALITLNK.

Positions methionine 1–isoleucine 67 are domain I. Positions glutamate 68 to proline 146 are domain II. The flexible linker stretch occupies residues proline 147–aspartate 157. A domain III region spans residues leucine 158–lysine 223.

The protein belongs to the RuvA family. As to quaternary structure, homotetramer. Forms an RuvA(8)-RuvB(12)-Holliday junction (HJ) complex. HJ DNA is sandwiched between 2 RuvA tetramers; dsDNA enters through RuvA and exits via RuvB. An RuvB hexamer assembles on each DNA strand where it exits the tetramer. Each RuvB hexamer is contacted by two RuvA subunits (via domain III) on 2 adjacent RuvB subunits; this complex drives branch migration. In the full resolvosome a probable DNA-RuvA(4)-RuvB(12)-RuvC(2) complex forms which resolves the HJ.

Its subcellular location is the cytoplasm. In terms of biological role, the RuvA-RuvB-RuvC complex processes Holliday junction (HJ) DNA during genetic recombination and DNA repair, while the RuvA-RuvB complex plays an important role in the rescue of blocked DNA replication forks via replication fork reversal (RFR). RuvA specifically binds to HJ cruciform DNA, conferring on it an open structure. The RuvB hexamer acts as an ATP-dependent pump, pulling dsDNA into and through the RuvAB complex. HJ branch migration allows RuvC to scan DNA until it finds its consensus sequence, where it cleaves and resolves the cruciform DNA. In Prochlorococcus marinus (strain MIT 9211), this protein is Holliday junction branch migration complex subunit RuvA.